We begin with the raw amino-acid sequence, 118 residues long: Large ribosomal subunit protein uL18 (118 aa).

It belongs to the universal ribosomal protein uL18 family. In terms of assembly, part of the 50S ribosomal subunit; part of the 5S rRNA/L5/L18/L25 subcomplex. Contacts the 5S and 23S rRNAs.

Its function is as follows. This is one of the proteins that bind and probably mediate the attachment of the 5S RNA into the large ribosomal subunit, where it forms part of the central protuberance. The sequence is that of Large ribosomal subunit protein uL18 from Rickettsia canadensis (strain McKiel).